Consider the following 611-residue polypeptide: Actin-binding LIM protein 2 (611 aa).

LIM zinc-binding domains lie at 22-81 (ILCN…LYGT), 81-141 (TRCF…VSVG), 151-210 (RSCG…KFGI), and 210-270 (IRCD…ARTE). Positions 83, 86, 103, 106, 109, 112, 131, and 134 each coordinate Zn(2+). Residues C212, C215, H232, C235, C238, C241, H260, and C263 each contribute to the Zn(2+) site. Residues 269–278 (TEDRNKETRT) show a composition bias toward basic and acidic residues. 2 disordered regions span residues 269–295 (TEDR…SGSP) and 336–527 (YISH…DQRN). Low complexity-rich tracts occupy residues 279–295 (SSES…SGSP) and 363–372 (SSPSSTGSVS). Phosphoserine is present on residues S282, S294, S364, and S367. Over residues 393–404 (SGRSTPSLSVLS) the composition is skewed to polar residues. S452 bears the Phosphoserine mark. T472 is modified (phosphothreonine). Polar residues predominate over residues 473-488 (RTNSPDLDTQSLSHSS). A phosphoserine mark is found at S476 and S578. In terms of domain architecture, HP spans 543-611 (MREYKIYPYD…NDLKKKALLF (69 aa)).

Interacts with F-actin and ABRA. Highly expressed in skeletal muscle.

It localises to the cytoplasm. Functionally, may act as scaffold protein. May stimulate ABRA activity and ABRA-dependent SRF transcriptional activity. This is Actin-binding LIM protein 2 (ABLIM2) from Homo sapiens (Human).